Here is a 201-residue protein sequence, read N- to C-terminus: Pyrrolidone-carboxylate peptidase (201 aa).

Residues glutamate 78, cysteine 141, and histidine 165 contribute to the active site.

This sequence belongs to the peptidase C15 family. As to quaternary structure, homotetramer.

It is found in the cytoplasm. The catalysed reaction is Release of an N-terminal pyroglutamyl group from a polypeptide, the second amino acid generally not being Pro.. Removes 5-oxoproline from various penultimate amino acid residues except L-proline. The sequence is that of Pyrrolidone-carboxylate peptidase from Brachyspira hyodysenteriae (strain ATCC 49526 / WA1).